We begin with the raw amino-acid sequence, 177 residues long: Peptide methionine sulfoxide reductase MsrA (177 aa).

Residue cysteine 14 is part of the active site.

This sequence belongs to the MsrA Met sulfoxide reductase family.

It carries out the reaction L-methionyl-[protein] + [thioredoxin]-disulfide + H2O = L-methionyl-(S)-S-oxide-[protein] + [thioredoxin]-dithiol. The enzyme catalyses [thioredoxin]-disulfide + L-methionine + H2O = L-methionine (S)-S-oxide + [thioredoxin]-dithiol. In terms of biological role, has an important function as a repair enzyme for proteins that have been inactivated by oxidation. Catalyzes the reversible oxidation-reduction of methionine sulfoxide in proteins to methionine. The protein is Peptide methionine sulfoxide reductase MsrA of Bacillus velezensis (strain DSM 23117 / BGSC 10A6 / LMG 26770 / FZB42) (Bacillus amyloliquefaciens subsp. plantarum).